The sequence spans 310 residues: Aspartate carbamoyltransferase catalytic subunit (310 aa).

Residues Arg55 and Thr56 each contribute to the carbamoyl phosphate site. Lys85 lines the L-aspartate pocket. Carbamoyl phosphate contacts are provided by Arg106, His135, and Gln138. Residues Arg168 and Arg230 each coordinate L-aspartate. Residues Leu268 and Pro269 each contribute to the carbamoyl phosphate site.

It belongs to the aspartate/ornithine carbamoyltransferase superfamily. ATCase family. As to quaternary structure, heterododecamer (2C3:3R2) of six catalytic PyrB chains organized as two trimers (C3), and six regulatory PyrI chains organized as three dimers (R2).

The enzyme catalyses carbamoyl phosphate + L-aspartate = N-carbamoyl-L-aspartate + phosphate + H(+). It participates in pyrimidine metabolism; UMP biosynthesis via de novo pathway; (S)-dihydroorotate from bicarbonate: step 2/3. Catalyzes the condensation of carbamoyl phosphate and aspartate to form carbamoyl aspartate and inorganic phosphate, the committed step in the de novo pyrimidine nucleotide biosynthesis pathway. The protein is Aspartate carbamoyltransferase catalytic subunit of Buchnera aphidicola subsp. Acyrthosiphon pisum (strain 5A).